The following is a 790-amino-acid chain: Probable E3 ubiquitin-protein ligase MARCHF10 (790 aa).

Positions 33-240 are disordered; that stretch reads LKRQEHKKEP…PQNEPHTALS (208 aa). The segment covering 34–48 has biased composition (basic and acidic residues); the sequence is KRQEHKKEPNEKKQE. Over residues 61 to 70 the composition is skewed to low complexity; that stretch reads FSSGSSCKQS. A Phosphoserine modification is found at Ser-78. Residues 218 to 227 show a composition bias toward basic and acidic residues; the sequence is PLERQKKGDP. Residues 230–240 show a composition bias toward polar residues; it reads RPQNEPHTALS. A coiled-coil region spans residues 284–308; the sequence is LSLNNEQENYDTEEETRTEEELLLA. 2 disordered regions span residues 323–416 and 507–569; these read GTSA…EDVS and LSPI…RHLQ. Composition is skewed to polar residues over residues 355-370, 406-416, and 511-520; these read RKTS…SSPG, GVTQVSAEDVS, and RNRNPSAASE. Basic and acidic residues predominate over residues 521–533; the sequence is SHSEDTQGEEERA. The span at 534 to 563 shows a compositional bias: polar residues; that stretch reads STSQAQESPLLSDLPNPQSSMALGDSPSSP. The RING-CH-type zinc-finger motif lies at 633-703; that stretch reads DSEEEGDLCR…EMCKQGLLVD (71 aa). Zn(2+) is bound by residues Cys-641, Cys-644, Cys-659, Cys-661, His-669, Cys-672, Cys-693, and Cys-696. The interval 757–790 is disordered; that stretch reads ERMSRNYPQPRPEESESSESGDGNESNVYPGRVI. Over residues 774 to 783 the composition is skewed to low complexity; that stretch reads SESGDGNESN.

It carries out the reaction S-ubiquitinyl-[E2 ubiquitin-conjugating enzyme]-L-cysteine + [acceptor protein]-L-lysine = [E2 ubiquitin-conjugating enzyme]-L-cysteine + N(6)-ubiquitinyl-[acceptor protein]-L-lysine.. It participates in protein modification; protein ubiquitination. E3 ubiquitin-protein ligase. E3 ubiquitin ligases accept ubiquitin from an E2 ubiquitin-conjugating enzyme in the form of a thioester and then directly transfer the ubiquitin to targeted substrates. This is Probable E3 ubiquitin-protein ligase MARCHF10 (Marchf10) from Rattus norvegicus (Rat).